A 280-amino-acid polypeptide reads, in one-letter code: Manganese import system permease protein ScaB (280 aa).

The next 8 helical transmembrane spans lie at 18 to 38, 61 to 81, 94 to 114, 139 to 159, 174 to 194, 196 to 216, 222 to 242, and 246 to 266; these read ALITAIAIGIVAGAVGCFIIL, ILGINFFIGAIVFGLLASILI, TAIGITFSSFLALGVILIGVA, TIGVGVTVLLVICLLFRPLLL, VKIYHYLLMVLLTLVSVTAMQ, VGTILIVAMLITPAATAYLYA, MMLLSSSLGALASILGLFIGY, and IAVGSCIVLTSAVFFLISFFI.

Belongs to the ABC-3 integral membrane protein family.

Its subcellular location is the cell membrane. In terms of biological role, part of an ABC transporter complex involved in manganese import. The protein is Manganese import system permease protein ScaB of Streptococcus parasanguinis.